A 470-amino-acid polypeptide reads, in one-letter code: 5-hydroxytryptamine receptor 2A (470 aa).

Residues 1–23 (MDVLFEDNAPLSPTTSSLMPSNG) are disordered. Over 1-80 (MDVLFEDNAP…LQEKNWSALL (80 aa)) the chain is Extracellular. Residues 10–21 (PLSPTTSSLMPS) are compositionally biased toward low complexity. N-linked (GlcNAc...) asparagine glycans are attached at residues Asn38, Asn44, Asn51, and Asn54. Residues 81–97 (TAVVIILTIAGNILVIM) traverse the membrane as a helical segment. At 98–111 (AVSLEKKLQNATNY) the chain is on the cytoplasmic side. The chain crosses the membrane as a helical span at residues 112 to 137 (FLMSLAIADMLLGFLVMPVSMLTILY). The Extracellular segment spans residues 138–146 (GYRWPLPSK). A helical transmembrane segment spans residues 147 to 171 (LCAVWIYLDVLFSTASIMHLCAISL). Cys148 and Cys227 are joined by a disulfide. Asp155 contacts serotonin. The short motif at 172 to 174 (DRY) is the DRY motif; important for ligand-induced conformation changes element. Topologically, residues 172 to 191 (DRYVAIQNPIHHSRFNSRTK) are cytoplasmic. Residues 192 to 215 (AFLKIIAVWTISVGISMPIPVFGL) form a helical membrane-spanning segment. The Extracellular segment spans residues 216-232 (QDDSKVFKEGSCLLADD). A helical transmembrane segment spans residues 233–258 (NFVLIGSFVSFFIPLTIMVITYFLTI). The Cytoplasmic segment spans residues 259 to 321 (KSLQKEATLC…QSISNEQKAC (63 aa)). Phosphoserine is present on Ser280. A helical membrane pass occupies residues 322–347 (KVLGIVFFLFVVMWCPFFITNIMAVI). Asn342 contributes to the serotonin binding site. Cys348 and Cys352 are disulfide-bonded. Residues 348–355 (CKESCNED) lie on the Extracellular side of the membrane. A helical transmembrane segment spans residues 356–381 (IIGALLNVFVWIGYLSSAVNPLVYTL). Positions 375-379 (NPLVY) match the NPxxY motif; important for ligand-induced conformation changes and signaling motif. The Cytoplasmic segment spans residues 382–470 (FNKTYRSAFS…NTVNEKVSCV (89 aa)). The PDZ-binding signature appears at 468-470 (SCV).

Belongs to the G-protein coupled receptor 1 family. Interacts (via C-terminus) with MPDZ and PATJ. May interact (via C-terminus) with MPP3, PRDX6, DLG4, DLG1, CASK, APBA1 and MAGI2. Interacts with GRM2 and DRD2; this may affect signaling. Ubiquitous.

It localises to the cell membrane. Its subcellular location is the cell projection. The protein localises to the dendrite. It is found in the axon. The protein resides in the cytoplasmic vesicle. It localises to the membrane. Its subcellular location is the caveola. The protein localises to the presynapse. Its activity is regulated as follows. G-protein coupled receptor activity is regulated by lipids: oleamide increases HTR2A-mediated activity. In terms of biological role, G-protein coupled receptor for 5-hydroxytryptamine (serotonin). Also functions as a receptor for various drugs and psychoactive substances, including mescaline, psilocybin, 1-(2,5-dimethoxy-4-iodophenyl)-2-aminopropane (DOI) and lysergic acid diethylamide (LSD). Ligand binding causes a conformation change that triggers signaling via guanine nucleotide-binding proteins (G proteins) and modulates the activity of downstream effectors. HTR2A is coupled to G(q)/G(11) G alpha proteins and activates phospholipase C-beta, releasing diacylglycerol (DAG) and inositol 1,4,5-trisphosphate (IP3) second messengers that modulate the activity of phosphatidylinositol 3-kinase and promote the release of Ca(2+) ions from intracellular stores, respectively. Beta-arrestin family members inhibit signaling via G proteins and mediate activation of alternative signaling pathways. Affects neural activity, perception, cognition and mood. Plays a role in the regulation of behavior, including responses to anxiogenic situations and psychoactive substances. Plays a role in intestinal smooth muscle contraction, and may play a role in arterial vasoconstriction. This Canis lupus familiaris (Dog) protein is 5-hydroxytryptamine receptor 2A (HTR2A).